The sequence spans 276 residues: Thiazole synthase (276 aa).

The active-site Schiff-base intermediate with DXP is Lys117. 1-deoxy-D-xylulose 5-phosphate-binding positions include Gly178, 204 to 205 (AG), and 226 to 227 (NT).

Belongs to the ThiG family. Homotetramer. Forms heterodimers with either ThiH or ThiS.

Its subcellular location is the plastid. The protein localises to the chloroplast. The enzyme catalyses [ThiS sulfur-carrier protein]-C-terminal-Gly-aminoethanethioate + 2-iminoacetate + 1-deoxy-D-xylulose 5-phosphate = [ThiS sulfur-carrier protein]-C-terminal Gly-Gly + 2-[(2R,5Z)-2-carboxy-4-methylthiazol-5(2H)-ylidene]ethyl phosphate + 2 H2O + H(+). It participates in cofactor biosynthesis; thiamine diphosphate biosynthesis. Functionally, catalyzes the rearrangement of 1-deoxy-D-xylulose 5-phosphate (DXP) to produce the thiazole phosphate moiety of thiamine. Sulfur is provided by the thiocarboxylate moiety of the carrier protein ThiS. In vitro, sulfur can be provided by H(2)S. This Gracilaria tenuistipitata var. liui (Red alga) protein is Thiazole synthase.